The primary structure comprises 240 residues: Lysoplasmalogenase TMEM86A (240 aa).

At Met1–Ala21 the chain is on the cytoplasmic side. The helical transmembrane segment at Thr22–Ile42 threads the bilayer. Position 43 (Lys43) is a topological domain, extracellular. Residues Cys44–Ala64 form a helical membrane-spanning segment. The Cytoplasmic segment spans residues His65–Arg70. Residues Ile71–Gly91 traverse the membrane as a helical segment. Residue Tyr92 is a topological domain, extracellular. Residues Phe93–Met113 form a helical membrane-spanning segment. Residues Gln114–Pro115 lie on the Cytoplasmic side of the membrane. A helical membrane pass occupies residues Leu116–Tyr136. Topologically, residues Pro137 to Cys138 are extracellular. The helical transmembrane segment at Leu139–Trp159 threads the bilayer. Residues Arg160–Trp174 lie on the Cytoplasmic side of the membrane. A helical membrane pass occupies residues Thr175–Leu195. Over Asn196–Arg206 the chain is Extracellular. The chain crosses the membrane as a helical span at residues Ala207 to Ser227. At Arg228–Asn240 the chain is on the cytoplasmic side.

It belongs to the TMEM86 family. In terms of tissue distribution, expressed in the macrophages.

The protein localises to the endoplasmic reticulum membrane. The catalysed reaction is a 1-O-(1Z-alkenyl)-sn-glycero-3-phosphocholine + H2O = a 2,3-saturated aldehyde + sn-glycerol 3-phosphocholine. It catalyses the reaction a 1-O-(1Z-alkenyl)-sn-glycero-3-phosphoethanolamine + H2O = a 2,3-saturated aldehyde + sn-glycero-3-phosphoethanolamine. Its function is as follows. Catalyzes the hydrolysis of the vinyl ether bond of choline or ethanolamine lysoplasmalogens, forming fatty aldehyde and glycerophosphocholine or glycerophosphoethanolamine, respectively and is specific for the sn-2-deacylated (lyso) form of plasmalogen. Plays an important role in lysoplasmalogen metabolism in the adipocyte tissue and macrophages. This chain is Lysoplasmalogenase TMEM86A (TMEM86A), found in Homo sapiens (Human).